We begin with the raw amino-acid sequence, 679 residues long: UvrABC system protein B (679 aa).

The 152-residue stretch at Lys-25 to Val-176 folds into the Helicase ATP-binding domain. ATP is bound at residue Gly-38–Thr-45. The Beta-hairpin signature appears at Tyr-91–Ile-114. The region spanning Gln-429–Thr-583 is the Helicase C-terminal domain. The 36-residue stretch at Pro-639 to Lys-674 folds into the UVR domain.

This sequence belongs to the UvrB family. As to quaternary structure, forms a heterotetramer with UvrA during the search for lesions. Interacts with UvrC in an incision complex.

Its subcellular location is the cytoplasm. The UvrABC repair system catalyzes the recognition and processing of DNA lesions. A damage recognition complex composed of 2 UvrA and 2 UvrB subunits scans DNA for abnormalities. Upon binding of the UvrA(2)B(2) complex to a putative damaged site, the DNA wraps around one UvrB monomer. DNA wrap is dependent on ATP binding by UvrB and probably causes local melting of the DNA helix, facilitating insertion of UvrB beta-hairpin between the DNA strands. Then UvrB probes one DNA strand for the presence of a lesion. If a lesion is found the UvrA subunits dissociate and the UvrB-DNA preincision complex is formed. This complex is subsequently bound by UvrC and the second UvrB is released. If no lesion is found, the DNA wraps around the other UvrB subunit that will check the other stand for damage. The chain is UvrABC system protein B from Prochlorococcus marinus (strain MIT 9301).